Reading from the N-terminus, the 278-residue chain is Deoxyuridine 5'-triphosphate nucleotidohydrolase (278 aa).

Residues 171–173 (RSG) and 273–274 (FG) contribute to the substrate site.

It belongs to the dUTPase family. Mg(2+) serves as cofactor.

The enzyme catalyses dUTP + H2O = dUMP + diphosphate + H(+). In terms of biological role, involved in nucleotide metabolism: produces dUMP, the immediate precursor of thymidine nucleotides and decreases the intracellular concentration of dUTP to avoid uracil incorporation into viral DNA. This is Deoxyuridine 5'-triphosphate nucleotidohydrolase from Homo sapiens (Human).